A 619-amino-acid chain; its full sequence is Tyrosine-protein kinase ZAP-70 (619 aa).

The region spanning 10-102 (FFYGSISRAE…GLPCNLRKPC (93 aa)) is the SH2 1 domain. An interdomain A region spans residues 103 to 162 (NRPSGLEPQPGVFDCLRDAMVRDYVRQTWKLEGEALEQAIISQAPQVEKLIATTAHERMP). The region spanning 163–254 (WYHSSLTREE…GLIYCLKEAC (92 aa)) is the SH2 2 domain. Y248 carries the phosphotyrosine modification. An interdomain B region spans residues 255–337 (PNSSASNASG…KKLFLKRDNL (83 aa)). A disordered region spans residues 260–309 (SNASGAAAPTLPAHPSTLTHPQRRIDTLNSDGYTPEPARITSPDKPRPMP). Position 289 is a phosphoserine (S289). Y292 carries the phosphotyrosine modification. Y315 bears the Phosphotyrosine; by LCK mark. Y319 is subject to Phosphotyrosine. A Protein kinase domain is found at 338–600 (LIADIELGCG…QRMRACYYSL (263 aa)). ATP-binding positions include 345-352 (GCGNFGSV) and K369. D461 serves as the catalytic Proton acceptor. A phosphotyrosine mark is found at Y492 and Y493. Residue K544 forms a Glycyl lysine isopeptide (Lys-Gly) (interchain with G-Cter in ubiquitin) linkage. K603 carries the N6-acetyllysine modification.

This sequence belongs to the protein kinase superfamily. Tyr protein kinase family. SYK/ZAP-70 subfamily. In terms of assembly, interacts with CD247/CD3Z; this interaction docks ZAP70 at the stimulated TCR. Interacts with NFAM1. Interacts with adapter protein SLA; this interaction negatively regulates T-cell receptor signaling. Interacts with FCRL3. Interacts with VAV1. Interacts with CBL; this interaction promotes ubiquitination, internalization and subsequent degradation of CD247/CD3Z. Identified in a complex with CBL and UBE2L3. Interacts with SHB. Interacts with adapter protein SLA2; this interaction negatively regulates T-cell receptor signaling. Interacts with CBLB. Interacts (via SH2 domains) with RHOH; this interaction regulates ZAP70 subcellular localization. Interacts with DEF6. Interacts (ubiquitinated form) with OTUD7B and UBASH3B. Post-translationally, phosphorylated on tyrosine residues upon T-cell antigen receptor (TCR) stimulation. Phosphorylation of Tyr-315 and Tyr-319 are essential for ZAP70 positive function on T-lymphocyte activation whereas Tyr-292 has a negative regulatory role. Within the C-terminal kinase domain, Tyr-492 and Tyr-493 are phosphorylated after TCR induction, Tyr-492 playing a negative regulatory role and Tyr-493 a positive. Tyr-493 is dephosphorylated by PTN22. Ubiquitinated in response to T cell activation. Deubiquitinated by OTUD7B. Expressed in T- and natural killer cells. Also present in early thymocytes and pro/pre B-cells.

It localises to the cytoplasm. The protein resides in the cell membrane. The enzyme catalyses L-tyrosyl-[protein] + ATP = O-phospho-L-tyrosyl-[protein] + ADP + H(+). Its activity is regulated as follows. Activated by phosphorylation at Tyr-493 in the activation loop. Inhibited by staurosporine. Functionally, tyrosine kinase that plays an essential role in regulation of the adaptive immune response. Regulates motility, adhesion and cytokine expression of mature T-cells, as well as thymocyte development. Also contributes to the development and activation of primary B-lymphocytes. When antigen presenting cells (APC) activate T-cell receptor (TCR), a serie of phosphorylations lead to the recruitment of ZAP70 to the doubly phosphorylated TCR component CD247/CD3Z through ITAM motif at the plasma membrane. This recruitment serves to localization to the stimulated TCR and to relieve its autoinhibited conformation. Release of ZAP70 active conformation is further stabilized by phosphorylation mediated by LCK. Subsequently, ZAP70 phosphorylates at least 2 essential adapter proteins: LAT and LCP2. In turn, a large number of signaling molecules are recruited and ultimately lead to lymphokine production, T-cell proliferation and differentiation. Furthermore, ZAP70 controls cytoskeleton modifications, adhesion and mobility of T-lymphocytes, thus ensuring correct delivery of effectors to the APC. ZAP70 is also required for TCR-CD247/CD3Z internalization and degradation through interaction with the E3 ubiquitin-protein ligase CBL and adapter proteins SLA and SLA2. Thus, ZAP70 regulates both T-cell activation switch on and switch off by modulating TCR expression at the T-cell surface. During thymocyte development, ZAP70 promotes survival and cell-cycle progression of developing thymocytes before positive selection (when cells are still CD4/CD8 double negative). Additionally, ZAP70-dependent signaling pathway may also contribute to primary B-cells formation and activation through B-cell receptor (BCR). The sequence is that of Tyrosine-protein kinase ZAP-70 (ZAP70) from Homo sapiens (Human).